The sequence spans 290 residues: uncharacterized protein (290 aa).

This is an uncharacterized protein from Ictalurid herpesvirus 1 (strain Auburn) (IcHV-1).